The chain runs to 155 residues: Small ribosomal subunit protein uS7cz/uS7cy (155 aa).

This sequence belongs to the universal ribosomal protein uS7 family. In terms of assembly, part of the 30S ribosomal subunit.

It localises to the plastid. The protein resides in the chloroplast. Functionally, one of the primary rRNA binding proteins, it binds directly to 16S rRNA where it nucleates assembly of the head domain of the 30S subunit. The chain is Small ribosomal subunit protein uS7cz/uS7cy (rps7-A) from Eucalyptus globulus subsp. globulus (Tasmanian blue gum).